The chain runs to 395 residues: Nickel and cobalt resistance protein CnrB (395 aa).

The chain crosses the membrane as a helical span at residues 13 to 33 (MIAGVAAVAAAVGFGAAHLPV). Positions 35–55 (EKSPASTQAPEAQKPQSAPVK) are disordered. Polar residues predominate over residues 37–50 (SPASTQAPEAQKPQ). The stretch at 140–193 (AAERKVAQAKADLARKTYEREASLFQQGVTPRQEMEAAKAALDVAQAEALRAAT) forms a coiled coil.

This sequence belongs to the membrane fusion protein (MFP) (TC 8.A.1) family.

The protein localises to the cell inner membrane. In terms of biological role, the products of the genes cnrA, cnrB, and cnrC are likely to form a membrane-bound protein complex catalyzing an energy-dependent efflux of Ni(2+) and Co(2+). The mechanism of action of the CnrCBA complex may be that of a proton/cation antiporter. This Cupriavidus metallidurans (strain ATCC 43123 / DSM 2839 / NBRC 102507 / CH34) (Ralstonia metallidurans) protein is Nickel and cobalt resistance protein CnrB (cnrB).